We begin with the raw amino-acid sequence, 204 residues long: LexA repressor (204 aa).

A DNA-binding region (H-T-H motif) is located at residues valine 29–serine 49. Active-site for autocatalytic cleavage activity residues include serine 126 and lysine 163.

Belongs to the peptidase S24 family. As to quaternary structure, homodimer.

The enzyme catalyses Hydrolysis of Ala-|-Gly bond in repressor LexA.. In terms of biological role, represses a number of genes involved in the response to DNA damage (SOS response), including recA and lexA. In the presence of single-stranded DNA, RecA interacts with LexA causing an autocatalytic cleavage which disrupts the DNA-binding part of LexA, leading to derepression of the SOS regulon and eventually DNA repair. This chain is LexA repressor, found in Clostridium novyi (strain NT).